Reading from the N-terminus, the 35-residue chain is Trypsin inhibitor 1 (35 aa).

Cystine bridges form between C2-C19, C9-C23, and C18-C34.

In terms of biological role, trypsin inhibitor. The polypeptide is Trypsin inhibitor 1 (Spinacia oleracea (Spinach)).